Reading from the N-terminus, the 214-residue chain is Large ribosomal subunit protein uL16 (214 aa).

At Arg32 the chain carries Citrulline. Lys175 is covalently cross-linked (Glycyl lysine isopeptide (Lys-Gly) (interchain with G-Cter in SUMO2)). Residue Lys188 forms a Glycyl lysine isopeptide (Lys-Gly) (interchain with G-Cter in ubiquitin) linkage.

It belongs to the universal ribosomal protein uL16 family. Component of the large ribosomal subunit. Mature ribosomes consist of a small (40S) and a large (60S) subunit. The 40S subunit contains about 33 different proteins and 1 molecule of RNA (18S). The 60S subunit contains about 49 different proteins and 3 molecules of RNA (28S, 5.8S and 5S). Citrullinated by PADI4. Post-translationally, ufmylated by UFL1.

Its subcellular location is the cytoplasm. Component of the large ribosomal subunit. Plays a role in the formation of actively translating ribosomes. May play a role in the embryonic brain development. The protein is Large ribosomal subunit protein uL16 of Pongo abelii (Sumatran orangutan).